The sequence spans 269 residues: Tryptophan synthase alpha chain (269 aa).

Residues Glu49 and Asp60 each act as proton acceptor in the active site.

Belongs to the TrpA family. Tetramer of two alpha and two beta chains.

It catalyses the reaction (1S,2R)-1-C-(indol-3-yl)glycerol 3-phosphate + L-serine = D-glyceraldehyde 3-phosphate + L-tryptophan + H2O. It functions in the pathway amino-acid biosynthesis; L-tryptophan biosynthesis; L-tryptophan from chorismate: step 5/5. Functionally, the alpha subunit is responsible for the aldol cleavage of indoleglycerol phosphate to indole and glyceraldehyde 3-phosphate. In Pseudomonas fluorescens (strain SBW25), this protein is Tryptophan synthase alpha chain.